The chain runs to 131 residues: 23S rRNA-specific endonuclease VapC20 (131 aa).

The PINc domain occupies Ile2–Phe125. 2 residues coordinate Mg(2+): Asp5 and Asp98.

It belongs to the PINc/VapC protein family. The cofactor is Mg(2+).

Its function is as follows. Toxic component of a type II toxin-antitoxin (TA) system. An endoribonuclease that cleaves 23S rRNA in the sarcin-ricin loop (SRL). The SRL sequence is highly conserved and is implicated in GTP hydrolysis by EF-Tu and EF-G. Acts on purified ribosomes but not on isolated RNA. Its toxic effect is neutralized by coexpression with cognate antitoxin VapB20. In Mycobacterium tuberculosis (strain CDC 1551 / Oshkosh), this protein is 23S rRNA-specific endonuclease VapC20 (vapC20).